A 262-amino-acid chain; its full sequence is ABSCISIC ACID-INSENSITIVE 5-like protein 3 (262 aa).

Residues Ser21, Ser43, and Ser66 each carry the phosphoserine modification. Phosphothreonine is present on Thr104. The 64-residue stretch at 190–253 (VERRQKRMIK…SEPPPDPKWK (64 aa)) folds into the bZIP domain. Residues 192 to 211 (RRQKRMIKNRESAARSRARK) are basic motif. A leucine-zipper region spans residues 218–232 (LEIKVSRLEEENEKL). Residues 239–252 (EKILPSEPPPDPKW) are compositionally biased toward basic and acidic residues. A disordered region spans residues 239 to 262 (EKILPSEPPPDPKWKLRRTNSASL).

This sequence belongs to the bZIP family. ABI5 subfamily. As to quaternary structure, DNA-binding heterodimer with ABI5/DPBF1, DPBF2 or AREB3/DPBF3. Interacts with the AFP proteins AFP2, AFP3 and AFP4. Predominantly expressed in seeds.

Its subcellular location is the nucleus. Binds to the embryo specification element and the ABA-responsive element (ABRE) of the Dc3 gene promoter and to the ABRE of the Em1 gene promoter. Could participate in abscisic acid-regulated gene expression during seed development. The polypeptide is ABSCISIC ACID-INSENSITIVE 5-like protein 3 (DPBF4) (Arabidopsis thaliana (Mouse-ear cress)).